Here is a 505-residue protein sequence, read N- to C-terminus: MRYEELDEACRSLEHLASDAEAEGEDAPLIPDPPGAVSPPTSLSGKAVLQVILLCASATLTLDIGLTVVRAPKIRLFESILCQAYYRTHGNPLPVPMQNIPESQCKTKEIQSGVARLIGWQTVFDGIPAIFLAIPYGALSDSKGRRPVLLLCFLGLALSTAWALLVCWMQWPLELTWISSLFQCLGGGPAVATAVLEATIADVVPDDKRSTIYFQLQATVLISDILANPLSSVLMAHNAWTPCFLGVGIQALATVLLIALPETLDFAKGSRPSDASIYGCKEEEPTLRGCLAKNFRSIVSDRNVAGLVFSLLILTVSAESLDFLLQYVSQRYGWSIAQSAMLLSLRAVVEFGLLLVVGSLLLFTQSSGLRNPRQRDLLIARLSLGLIVAGLLILSLSPTVAPAILVYTLGAGFQPAIMSLLASLWKASNPSNLGSLYSTVAIILAVGGVISGPLISLMYRIGLSLGHGWVGLPYFVASGLCAGIAGVLLSVKLPEQEQKPRRRET.

A run of 12 helical transmembrane segments spans residues 48–68, 117–137, 148–168, 181–201, 216–236, 240–260, 304–324, 343–363, 377–399, 403–425, 439–459, and 469–489; these read VLQVILLCASATLTLDIGLTV, LIGWQTVFDGIPAIFLAIPYG, VLLLCFLGLALSTAWALLVCW, LFQCLGGGPAVATAVLEATIA, LQATVLISDILANPLSSVLMA, WTPCFLGVGIQALATVLLIAL, VAGLVFSLLILTVSAESLDFL, LSLRAVVEFGLLLVVGSLLLF, LLIARLSLGLIVAGLLILSLSPT, AILVYTLGAGFQPAIMSLLASLW, TVAIILAVGGVISGPLISLMY, and WVGLPYFVASGLCAGIAGVLL.

This sequence belongs to the major facilitator superfamily.

The protein localises to the membrane. The protein operates within secondary metabolite biosynthesis. Functionally, MFS efflux pump; part of the gene cluster that mediates the biosynthesis of aspercryptins, linear lipopeptides built from six amino acids including 2 highly unusual and nonproteogenic amino acids, 2-amino-octanoic acid (2aoa) and 2-amino-dodecanol (2adol). The sequence is that of MFS efflux pump atnC from Emericella nidulans (strain FGSC A4 / ATCC 38163 / CBS 112.46 / NRRL 194 / M139) (Aspergillus nidulans).